A 361-amino-acid chain; its full sequence is Phospho-N-acetylmuramoyl-pentapeptide-transferase (361 aa).

10 consecutive transmembrane segments (helical) span residues Ser26–Gln46, Thr73–Leu93, Val98–Ile118, Ile139–Thr159, Ile168–Phe188, Gly200–Ser220, Ala237–Phe257, Val264–Ile284, Leu289–Val309, and Val339–Lys359.

The protein belongs to the glycosyltransferase 4 family. MraY subfamily. It depends on Mg(2+) as a cofactor.

Its subcellular location is the cell inner membrane. The catalysed reaction is UDP-N-acetyl-alpha-D-muramoyl-L-alanyl-gamma-D-glutamyl-meso-2,6-diaminopimeloyl-D-alanyl-D-alanine + di-trans,octa-cis-undecaprenyl phosphate = di-trans,octa-cis-undecaprenyl diphospho-N-acetyl-alpha-D-muramoyl-L-alanyl-D-glutamyl-meso-2,6-diaminopimeloyl-D-alanyl-D-alanine + UMP. It functions in the pathway cell wall biogenesis; peptidoglycan biosynthesis. Its function is as follows. Catalyzes the initial step of the lipid cycle reactions in the biosynthesis of the cell wall peptidoglycan: transfers peptidoglycan precursor phospho-MurNAc-pentapeptide from UDP-MurNAc-pentapeptide onto the lipid carrier undecaprenyl phosphate, yielding undecaprenyl-pyrophosphoryl-MurNAc-pentapeptide, known as lipid I. This chain is Phospho-N-acetylmuramoyl-pentapeptide-transferase, found in Xylella fastidiosa (strain 9a5c).